The following is a 74-amino-acid chain: uncharacterized protein (74 aa).

This is an uncharacterized protein from Homo sapiens (Human).